A 485-amino-acid polypeptide reads, in one-letter code: Packaging protein UL32 (485 aa).

Cys73, Cys76, His149, Cys155, Cys287, Cys290, His384, and Cys391 together coordinate Zn(2+). Zinc finger regions lie at residues 73-155 (CNIC…INRC) and 287-391 (CLLC…DPLC).

This sequence belongs to the herpesviridae UL32 protein family.

The protein resides in the host cytoplasm. The protein localises to the host nucleus. Its function is as follows. Plays a role in efficient localization of neo-synthesized capsids to nuclear replication compartments, thereby controlling cleavage and packaging of virus genomic DNA. This chain is Packaging protein UL32 (U36), found in Human herpesvirus 7 (strain JI) (HHV-7).